The following is an 81-amino-acid chain: Putative defensin-like protein 148 (81 aa).

A signal peptide spans M1–G24. Intrachain disulfides connect C34/C80, C43/C63, C48/C74, and C52/C76.

The protein belongs to the DEFL family.

It localises to the secreted. This is Putative defensin-like protein 148 (LCR4) from Arabidopsis thaliana (Mouse-ear cress).